The sequence spans 460 residues: Tol-Pal system protein TolB (460 aa).

The signal sequence occupies residues 1–22 (MTIFQKSFILLIIWNFSLFAFS).

It belongs to the TolB family. The Tol-Pal system is composed of five core proteins: the inner membrane proteins TolA, TolQ and TolR, the periplasmic protein TolB and the outer membrane protein Pal. They form a network linking the inner and outer membranes and the peptidoglycan layer.

Its subcellular location is the periplasm. Functionally, part of the Tol-Pal system, which plays a role in outer membrane invagination during cell division and is important for maintaining outer membrane integrity. TolB occupies a key intermediary position in the Tol-Pal system because it communicates directly with both membrane-embedded components, Pal in the outer membrane and TolA in the inner membrane. The protein is Tol-Pal system protein TolB of Blochmanniella floridana.